We begin with the raw amino-acid sequence, 141 residues long: Endoribonuclease YbeY (141 aa).

Zn(2+) is bound by residues His-100, His-104, and His-110.

It belongs to the endoribonuclease YbeY family. The cofactor is Zn(2+).

The protein resides in the cytoplasm. Functionally, single strand-specific metallo-endoribonuclease involved in late-stage 70S ribosome quality control and in maturation of the 3' terminus of the 16S rRNA. This is Endoribonuclease YbeY from Helicobacter pylori (strain J99 / ATCC 700824) (Campylobacter pylori J99).